A 404-amino-acid polypeptide reads, in one-letter code: Alpha-galactosidase A (404 aa).

An N-terminal signal peptide occupies residues 1–23 (MRKQLLLGLGLVSALLVSVQASA). 2 disulfide bridges follow: cysteine 45-cysteine 77 and cysteine 124-cysteine 154. Residue aspartate 152 is the Nucleophile of the active site. 185 to 189 (EWGDN) lines the substrate pocket. Aspartate 207 serves as the catalytic Proton donor.

This sequence belongs to the glycosyl hydrolase 27 family.

The catalysed reaction is Hydrolysis of terminal, non-reducing alpha-D-galactose residues in alpha-D-galactosides, including galactose oligosaccharides, galactomannans and galactolipids.. Functionally, hydrolyzes galactomannan found in plant cell wall, by cleaving alpha-1,6-D-galactose side-chains from the mannan backbone. Appears to act in synergy with mannanase (ManA) to elicit hydrolysis of galactomannan. Has greater activity against galactomannans with decreased degree of polymerisation values. To a lesser extent, is also able to degrade other galactosides containing alpha-1,6-linked D-galactose, such as melibiose and stachyose. In Cellvibrio japonicus (strain Ueda107) (Pseudomonas fluorescens subsp. cellulosa), this protein is Alpha-galactosidase A (agaA).